Reading from the N-terminus, the 288-residue chain is MLKKLKIKLQYLLPQHALTRLAGWAANKKAGWLTQQVIKIFASYYRVNIKEAQYTEFSAYSSFNEFFIRSLRSDVRPIAAGDNILVQPADGTISESGRIDKDKILQAKGHDYSLEALLAGQSLLAKEFENGQFVTTYLAPGDYHRVHMPCDGVLREMIYVPGSLFSVNAFFAENVPYLFARNERVICIFNTAFGTMAQILVGAMIVGSIETLWSGPVDSQRKGIIQRWVYPDEGSEAPIILKKGEEMGLFKLGSTVINLFVSNKIKLASHLQNGSITRLGEILGEAPH.

Residues D90, H147, and S254 each act as charge relay system; for autoendoproteolytic cleavage activity in the active site. Catalysis depends on S254, which acts as the Schiff-base intermediate with substrate; via pyruvic acid; for decarboxylase activity. S254 bears the Pyruvic acid (Ser); by autocatalysis mark.

It belongs to the phosphatidylserine decarboxylase family. PSD-B subfamily. Prokaryotic type I sub-subfamily. In terms of assembly, heterodimer of a large membrane-associated beta subunit and a small pyruvoyl-containing alpha subunit. It depends on pyruvate as a cofactor. Post-translationally, is synthesized initially as an inactive proenzyme. Formation of the active enzyme involves a self-maturation process in which the active site pyruvoyl group is generated from an internal serine residue via an autocatalytic post-translational modification. Two non-identical subunits are generated from the proenzyme in this reaction, and the pyruvate is formed at the N-terminus of the alpha chain, which is derived from the carboxyl end of the proenzyme. The autoendoproteolytic cleavage occurs by a canonical serine protease mechanism, in which the side chain hydroxyl group of the serine supplies its oxygen atom to form the C-terminus of the beta chain, while the remainder of the serine residue undergoes an oxidative deamination to produce ammonia and the pyruvoyl prosthetic group on the alpha chain. During this reaction, the Ser that is part of the protease active site of the proenzyme becomes the pyruvoyl prosthetic group, which constitutes an essential element of the active site of the mature decarboxylase.

It is found in the cell membrane. It catalyses the reaction a 1,2-diacyl-sn-glycero-3-phospho-L-serine + H(+) = a 1,2-diacyl-sn-glycero-3-phosphoethanolamine + CO2. It functions in the pathway phospholipid metabolism; phosphatidylethanolamine biosynthesis; phosphatidylethanolamine from CDP-diacylglycerol: step 2/2. Its function is as follows. Catalyzes the formation of phosphatidylethanolamine (PtdEtn) from phosphatidylserine (PtdSer). In Hamiltonella defensa subsp. Acyrthosiphon pisum (strain 5AT), this protein is Phosphatidylserine decarboxylase proenzyme.